We begin with the raw amino-acid sequence, 184 residues long: ATP synthase subunit b, chloroplastic (184 aa).

The chain crosses the membrane as a helical span at residues 27-49; it reads LATNPINLSVVLGVLIFFGKGVL.

This sequence belongs to the ATPase B chain family. As to quaternary structure, F-type ATPases have 2 components, F(1) - the catalytic core - and F(0) - the membrane proton channel. F(1) has five subunits: alpha(3), beta(3), gamma(1), delta(1), epsilon(1). F(0) has four main subunits: a(1), b(1), b'(1) and c(10-14). The alpha and beta chains form an alternating ring which encloses part of the gamma chain. F(1) is attached to F(0) by a central stalk formed by the gamma and epsilon chains, while a peripheral stalk is formed by the delta, b and b' chains.

It is found in the plastid. Its subcellular location is the chloroplast thylakoid membrane. In terms of biological role, f(1)F(0) ATP synthase produces ATP from ADP in the presence of a proton or sodium gradient. F-type ATPases consist of two structural domains, F(1) containing the extramembraneous catalytic core and F(0) containing the membrane proton channel, linked together by a central stalk and a peripheral stalk. During catalysis, ATP synthesis in the catalytic domain of F(1) is coupled via a rotary mechanism of the central stalk subunits to proton translocation. Component of the F(0) channel, it forms part of the peripheral stalk, linking F(1) to F(0). In Atropa belladonna (Belladonna), this protein is ATP synthase subunit b, chloroplastic.